The primary structure comprises 206 residues: Guanylate kinase (206 aa).

A Guanylate kinase-like domain is found at 7 to 185 (GIVLVLCAPS…AYDELRAAYL (179 aa)). Residue 14 to 21 (APSGTGKT) coordinates ATP.

The protein belongs to the guanylate kinase family.

The protein localises to the cytoplasm. The catalysed reaction is GMP + ATP = GDP + ADP. Functionally, essential for recycling GMP and indirectly, cGMP. This chain is Guanylate kinase, found in Oleidesulfovibrio alaskensis (strain ATCC BAA-1058 / DSM 17464 / G20) (Desulfovibrio alaskensis).